The chain runs to 48 residues: Ambineela (48 aa).

Monomer. The blue color is due to an unidentified non-fluorescent cofactor, covalently bound to it.

Its function is as follows. Ambineela is a blue protein and has a pI of 8.7. The polypeptide is Ambineela (Acidianus ambivalens (Desulfurolobus ambivalens)).